A 523-amino-acid chain; its full sequence is F-box only protein 31-B (523 aa).

The F-box domain maps to 59 to 105 (PRSLLQLPPEILVEIFSSLPGTELPSLAQVCRKFRQILTTDTIWKRR). Positions 201, 209, 225, and 231 each coordinate Zn(2+). A disordered region spans residues 372-427 (IQREQRQTGNEEDDGKGAGPDRAEHSQQPAPVHRPAKEDVNGVDNADDREQKPPNV). Basic and acidic residues-rich tracts occupy residues 386–396 (GKGAGPDRAEH) and 406–423 (PAKE…REQK).

The protein belongs to the FBXO31 family. As to quaternary structure, part of a SCF (SKP1-cullin-F-box) protein ligase complex SCF(FBXO31).

It localises to the cytoplasm. The protein operates within protein modification; protein ubiquitination. Substrate-recognition component of the SCF(FBXO31) protein ligase complex, which specifically mediates the ubiquitination of proteins amidated at their C-terminus in response to oxidative stress, leading to their degradation by the proteasome. Fbxo31 specifically recognizes and binds C-terminal peptides bearing an amide: C-terminal amidation in response to oxidative stress takes place following protein fragmentation. The SCF(FBXO31) also plays a role in G1 arrest following DNA damage by mediating ubiquitination of phosphorylated cyclin-D1 (ccnd1), promoting its degradation by the proteasome, resulting in G1 arrest. The SCF(FBXO31) complex is however not a major regulator of ccnd1 stability during the G1/S transition. The sequence is that of F-box only protein 31-B (fbxo31-b) from Xenopus laevis (African clawed frog).